The following is a 481-amino-acid chain: Small ribosomal subunit protein bS1 (481 aa).

S1 motif domains are found at residues 36 to 105 (GDIV…LSKK), 123 to 188 (DEAV…LSRR), 209 to 277 (GAIR…LSLK), and 294 to 363 (GQIV…LSLK). The disordered stretch occupies residues 437 to 465 (ATEEAGHGSSEQPPASSTPSAKATGGSLA). A compositionally biased stretch (polar residues) spans 445 to 457 (SSEQPPASSTPSA).

The protein belongs to the bacterial ribosomal protein bS1 family.

Functionally, binds mRNA; thus facilitating recognition of the initiation point. It is needed to translate mRNA with a short Shine-Dalgarno (SD) purine-rich sequence. This is Small ribosomal subunit protein bS1 (rpsA) from Mycobacterium leprae (strain TN).